Consider the following 705-residue polypeptide: Effector protein AvrPphDPsv (705 aa).

The segment covering 1–15 (MNPLQSIQHNITTPP) has biased composition (polar residues). Disordered stretches follow at residues 1 to 40 (MNPL…ISPS) and 175 to 205 (RLET…RRES).

It localises to the secreted. Functionally, effector protein involved in non-host recognition. The protein is Effector protein AvrPphDPsv (avrPphDPsv) of Pseudomonas savastanoi (Pseudomonas syringae pv. savastanoi).